Reading from the N-terminus, the 339-residue chain is Autophagy protein 5 (339 aa).

A Glycyl lysine isopeptide (Lys-Gly) (interchain with G-Cter in ATG12) cross-link involves residue Lys-168. Positions 219–230 are enriched in low complexity; sequence SSNSTQPSRPSS. The disordered stretch occupies residues 219-241; that stretch reads SSNSTQPSRPSSADPSGPPRAPD.

This sequence belongs to the ATG5 family. Conjugated with ATG12. Conjugated to ATG12; which is essential for autophagy.

Its subcellular location is the preautophagosomal structure membrane. Its function is as follows. Involved in cytoplasm to vacuole transport (Cvt) and autophagic vesicle formation. Autophagy is essential for maintenance of amino acid levels and protein synthesis under nitrogen starvation. Required for selective autophagic degradation of the nucleus (nucleophagy). Also required for mitophagy, which eliminates defective or superfluous mitochondria in order to fulfill cellular energy requirements and prevent excess ROS production. Conjugation with ATG12, through a ubiquitin-like conjugating system involving ATG7 as an E1-like activating enzyme and ATG10 as an E2-like conjugating enzyme, is essential for its function. The ATG12-ATG5 conjugate acts as an E3-like enzyme which is required for lipidation of ATG8 and ATG8 association to the vesicle membranes. In Cryptococcus neoformans var. neoformans serotype D (strain B-3501A) (Filobasidiella neoformans), this protein is Autophagy protein 5 (ATG5).